The following is a 248-amino-acid chain: uncharacterized protein (248 aa).

Positions 1 to 26 (MVAPRISPKIVLVGFALFAIISASLA) are cleaved as a signal peptide.

This is an uncharacterized protein from Acanthamoeba polyphaga mimivirus (APMV).